Here is a 114-residue protein sequence, read N- to C-terminus: Circadian clock oscillator protein KaiB (114 aa).

This sequence belongs to the KaiB family. In terms of assembly, may undergo a major conformational rearrangment; in the free state forms homooligomers. When bound to KaiC switches to a monomeric thioredoxin-fold (KaiB(fs)). The active oscillator complex is probably KaiC(6):KaiB(6).

Component of the KaiBC clock protein complex, which constitutes the main circadian regulator in cyanobacteria; it may modify the ATPase activity of KaiC. Its function is as follows. May be a metamorphic protein which reversibly switches between an inactive tetrameric fold and a rare, thioredoxin-like monomeric fold (KaiB(fs)). KaiB(fs) binds phospho-KaiC, and perhaps clock output effectors. This chain is Circadian clock oscillator protein KaiB, found in Prochlorococcus marinus (strain MIT 9211).